The sequence spans 600 residues: Putative DNA 3'-5' helicase Rad25 (600 aa).

The Helicase ATP-binding domain maps to 253 to 402; that stretch reads VDRFEDASAG…DIYTLVGRPI (150 aa). 266 to 273 is an ATP binding site; sequence GPPGSGKT. A DEAH box motif is present at residues 356–359; it reads DEVH. In terms of domain architecture, Helicase C-terminal spans 457–600; it reads EIEHLVDQHG…VTESDASHSP (144 aa). Residues 569–600 form a disordered region; the sequence is RGTEEEDHARSRMRHLSTKGVRVTESDASHSP. Positions 590–600 are enriched in basic and acidic residues; the sequence is RVTESDASHSP.

The protein belongs to the helicase family. RAD25/XPB subfamily.

It catalyses the reaction Couples ATP hydrolysis with the unwinding of duplex DNA by translocating in the 3'-5' direction.. The enzyme catalyses ATP + H2O = ADP + phosphate + H(+). In Halobacterium salinarum (strain ATCC 700922 / JCM 11081 / NRC-1) (Halobacterium halobium), this protein is Putative DNA 3'-5' helicase Rad25.